Here is an 89-residue protein sequence, read N- to C-terminus: Large ribosomal subunit protein bL27 (89 aa).

The segment at 1-22 (MAHKKGTGSTRNGRDSNAQRLG) is disordered. Positions 7 to 19 (TGSTRNGRDSNAQ) are enriched in polar residues.

The protein belongs to the bacterial ribosomal protein bL27 family.

The sequence is that of Large ribosomal subunit protein bL27 from Cyanothece sp. (strain PCC 7425 / ATCC 29141).